The primary structure comprises 517 residues: NAD(P)H-quinone oxidoreductase subunit 2 (517 aa).

The next 14 membrane-spanning stretches (helical) occupy residues 16 to 36 (ILPEGIVIITLVGVLVGDLIF), 43 to 63 (WLPYMAIIGLLASIVALYLAW), 80 to 100 (LSIVFRAIIALSTAVTILMSI), 110 to 130 (LAEFIAIMLTATLGGMFLCGA), 133 to 153 (LVMIFISLEMLSISSYLMTGY), 168 to 188 (LLIGASSSAIFLYGVSLLYGL), 211 to 231 (LGLAIALVFVIAGIAFKISAV), 245 to 265 (PTPVVAFLSVGSKAAGFALAI), 279 to 299 (WHFVFTALAILSMVLGNVVAL), 307 to 327 (MLAYSSIGQAGFVMIGLVAGT), 335 to 355 (VFYLLVYLFMNLGAFACIILF), 379 to 399 (LALSICLLSLGGIPPLAGFFG), 401 to 421 (IYLFWAGWQAELYGLVILGLV), and 467 to 487 (VGIVLTLIATSLAGILSNPLF).

The protein belongs to the complex I subunit 2 family. NDH-1 can be composed of about 15 different subunits; different subcomplexes with different compositions have been identified which probably have different functions.

It is found in the cellular thylakoid membrane. The enzyme catalyses a plastoquinone + NADH + (n+1) H(+)(in) = a plastoquinol + NAD(+) + n H(+)(out). It carries out the reaction a plastoquinone + NADPH + (n+1) H(+)(in) = a plastoquinol + NADP(+) + n H(+)(out). NDH-1 shuttles electrons from an unknown electron donor, via FMN and iron-sulfur (Fe-S) centers, to quinones in the respiratory and/or the photosynthetic chain. The immediate electron acceptor for the enzyme in this species is believed to be plastoquinone. Couples the redox reaction to proton translocation, and thus conserves the redox energy in a proton gradient. Cyanobacterial NDH-1 also plays a role in inorganic carbon-concentration. The sequence is that of NAD(P)H-quinone oxidoreductase subunit 2 from Rippkaea orientalis (strain PCC 8801 / RF-1) (Cyanothece sp. (strain PCC 8801)).